The chain runs to 361 residues: 45 kDa calcium-binding protein (361 aa).

A signal peptide spans 1–35; the sequence is MVWLVAMTPRQSSLCGLAAHGLWFLGLVLLMDATA. N-linked (GlcNAc...) asparagine glycosylation occurs at Asn39. EF-hand domains follow at residues 97–132 and 136–171; these read RSRR…KTAE and EAVK…SKGH. Residue Ser98 is modified to Phosphoserine. Positions 110, 112, 114, 116, 121, 149, 151, 153, 155, and 160 each coordinate Ca(2+). At Thr192 the chain carries Phosphothreonine. 4 EF-hand domains span residues 196 to 231, 232 to 267, 277 to 312, and 313 to 348; these read LGNL…HSRG, MLKF…TVEN, WVKD…MNEY, and NALN…FTGS. Asp212 lines the Ca(2+) pocket. Thr216 carries the phosphothreonine modification. Ca(2+)-binding residues include Glu219, Asp245, Asp247, Asp249, Gln251, and Glu256. Residue Thr264 is modified to Phosphothreonine. Ca(2+)-binding residues include Asp290, Asn292, and Asp294. The residue at position 298 (Thr298) is a Phosphothreonine. 6 residues coordinate Ca(2+): Glu301, Asp326, Asn328, Asn330, His332, and Glu337. A necessary for intracellular retention in Golgi apparatus lumen region spans residues 308 to 361; it reads PMNEYNALNEAKQMIAIADENQNHHLEPEEILKYSEFFTGSKLMDYARNVHEEF.

Belongs to the CREC family. Ubiquitous.

Its subcellular location is the golgi apparatus lumen. In terms of biological role, may regulate calcium-dependent activities in the endoplasmic reticulum lumen or post-ER compartment. The chain is 45 kDa calcium-binding protein (Sdf4) from Mus musculus (Mouse).